The sequence spans 72 residues: UPF0270 protein ETA_31870 (72 aa).

The protein belongs to the UPF0270 family.

In Erwinia tasmaniensis (strain DSM 17950 / CFBP 7177 / CIP 109463 / NCPPB 4357 / Et1/99), this protein is UPF0270 protein ETA_31870.